Reading from the N-terminus, the 158-residue chain is 2-C-methyl-D-erythritol 2,4-cyclodiphosphate synthase (158 aa).

A divalent metal cation contacts are provided by Asp9 and His11. 4-CDP-2-C-methyl-D-erythritol 2-phosphate contacts are provided by residues 9-11 (DVH) and 35-36 (HS). An a divalent metal cation-binding site is contributed by His43. 4-CDP-2-C-methyl-D-erythritol 2-phosphate-binding positions include 57–59 (DIG), 62–66 (FPDTD), 101–107 (AQKPKMA), 133–136 (TTTE), Phe140, and Arg143.

Belongs to the IspF family. In terms of assembly, homotrimer. The cofactor is a divalent metal cation.

It catalyses the reaction 4-CDP-2-C-methyl-D-erythritol 2-phosphate = 2-C-methyl-D-erythritol 2,4-cyclic diphosphate + CMP. The protein operates within isoprenoid biosynthesis; isopentenyl diphosphate biosynthesis via DXP pathway; isopentenyl diphosphate from 1-deoxy-D-xylulose 5-phosphate: step 4/6. Its function is as follows. Involved in the biosynthesis of isopentenyl diphosphate (IPP) and dimethylallyl diphosphate (DMAPP), two major building blocks of isoprenoid compounds. Catalyzes the conversion of 4-diphosphocytidyl-2-C-methyl-D-erythritol 2-phosphate (CDP-ME2P) to 2-C-methyl-D-erythritol 2,4-cyclodiphosphate (ME-CPP) with a corresponding release of cytidine 5-monophosphate (CMP). The polypeptide is 2-C-methyl-D-erythritol 2,4-cyclodiphosphate synthase (Bacillus velezensis (strain DSM 23117 / BGSC 10A6 / LMG 26770 / FZB42) (Bacillus amyloliquefaciens subsp. plantarum)).